The primary structure comprises 371 residues: Protein NDRG2 (371 aa).

The tract at residues 1–22 (MAELQEVQITEEKPLLPGQTPE) is disordered. At alanine 2 the chain carries N-acetylalanine. At threonine 20 the chain carries Phosphothreonine. 2 positions are modified to phosphoserine: serine 326 and serine 328. Threonine 330 carries the post-translational modification Phosphothreonine; by SGK1. Serine 332 is subject to Phosphoserine; by PKC/PRKCQ or SGK1. Phosphothreonine is present on threonine 334. The segment at 334–371 (TSAASIDGSRSRSRTLSQSSESGTLPSGPPGHTMEVSC) is disordered. Phosphoserine occurs at positions 335, 338, and 344. Phosphothreonine; by PKB/AKT1 or SGK1 is present on threonine 348. 4 positions are modified to phosphoserine: serine 350, serine 352, serine 353, and serine 355. Threonine 357 bears the Phosphothreonine mark. Phosphoserine is present on serine 370.

The protein belongs to the NDRG family. As to quaternary structure, interacts with CTNNB1. In terms of tissue distribution, expressed at highest levels in brain, heart and liver, and at lower levels in kidney, colon, skeletal muscle, adrenal gland, ovary and uterus (at protein level).

The protein resides in the cytoplasm. It is found in the perinuclear region. Its subcellular location is the cell projection. It localises to the growth cone. In terms of biological role, contributes to the regulation of the Wnt signaling pathway. Down-regulates CTNNB1-mediated transcriptional activation of target genes, such as CCND1, and may thereby act as tumor suppressor. May be involved in dendritic cell and neuron differentiation. In Mus musculus (Mouse), this protein is Protein NDRG2 (Ndrg2).